The sequence spans 156 residues: S-ribosylhomocysteine lyase (156 aa).

H56, H60, and C123 together coordinate Fe cation.

Belongs to the LuxS family. As to quaternary structure, homodimer. Fe cation is required as a cofactor.

It catalyses the reaction S-(5-deoxy-D-ribos-5-yl)-L-homocysteine = (S)-4,5-dihydroxypentane-2,3-dione + L-homocysteine. Functionally, involved in the synthesis of autoinducer 2 (AI-2) which is secreted by bacteria and is used to communicate both the cell density and the metabolic potential of the environment. The regulation of gene expression in response to changes in cell density is called quorum sensing. Catalyzes the transformation of S-ribosylhomocysteine (RHC) to homocysteine (HC) and 4,5-dihydroxy-2,3-pentadione (DPD). The sequence is that of S-ribosylhomocysteine lyase from Staphylococcus epidermidis (strain ATCC 35984 / DSM 28319 / BCRC 17069 / CCUG 31568 / BM 3577 / RP62A).